We begin with the raw amino-acid sequence, 537 residues long: Glucan 1,6-alpha-glucosidase (537 aa).

Asp194 acts as the Nucleophile in catalysis. Residue Glu236 is the Proton donor of the active site.

It belongs to the glycosyl hydrolase 13 family.

The protein localises to the cytoplasm. The catalysed reaction is Hydrolysis of (1-&gt;6)-alpha-D-glucosidic linkages in (1-&gt;6)-alpha-D-glucans and derived oligosaccharides.. The physiological substrates may be short isomaltosaccharides. This Streptococcus dysgalactiae subsp. equisimilis (Streptococcus equisimilis) protein is Glucan 1,6-alpha-glucosidase (dexB).